A 72-amino-acid polypeptide reads, in one-letter code: Translation initiation factor IF-1 (72 aa).

The 72-residue stretch at 1-72 folds into the S1-like domain; sequence MAKEDNIEMQ…SKGRIVFRSR (72 aa).

The protein belongs to the IF-1 family. In terms of assembly, component of the 30S ribosomal translation pre-initiation complex which assembles on the 30S ribosome in the order IF-2 and IF-3, IF-1 and N-formylmethionyl-tRNA(fMet); mRNA recruitment can occur at any time during PIC assembly.

It localises to the cytoplasm. Functionally, one of the essential components for the initiation of protein synthesis. Stabilizes the binding of IF-2 and IF-3 on the 30S subunit to which N-formylmethionyl-tRNA(fMet) subsequently binds. Helps modulate mRNA selection, yielding the 30S pre-initiation complex (PIC). Upon addition of the 50S ribosomal subunit IF-1, IF-2 and IF-3 are released leaving the mature 70S translation initiation complex. In Shewanella loihica (strain ATCC BAA-1088 / PV-4), this protein is Translation initiation factor IF-1.